The primary structure comprises 192 residues: Recombination protein RecR (192 aa).

Residues 51-66 (CQTCFHLSADPECEIC) form a C4-type zinc finger. One can recognise a Toprim domain in the interval 74–168 (GLICVVADSR…PVSRIAYGLP (95 aa)).

This sequence belongs to the RecR family.

Its function is as follows. May play a role in DNA repair. It seems to be involved in an RecBC-independent recombinational process of DNA repair. It may act with RecF and RecO. The protein is Recombination protein RecR of Parasynechococcus marenigrum (strain WH8102).